Here is a 355-residue protein sequence, read N- to C-terminus: MSANDRPATGQPTATYESAFLKACRREPVPHTPVWFMRQAGRSLPEYLKVREGIPMLESCMRPELVAEITLQPVRRHNVDAAIYFSDIVVPLKAIGIDLDIKPGVGPVVEKPIRTRADLAQLRDLTPEDVSYVTEAIKLLTAELGETPLIGFAGAPFTLASYLVEGGPSKNHEHTKALMYGDPQLWADLLDRLAEITSAFLKVQIEAGASAVQLFDSWVGALAPADYRRSVMPASTKVFQAVESYGVPRIHFGVGTGELLGLMGEAGADVVGVDWRVPLDEAARRVGTGKALQGNLDPAVLFSTTEAVETKTREVLDAAAGLEGHVFNLGHGVPPTTDPDALTRLVEYVHTQTAR.

Substrate contacts are provided by residues 38 to 42, aspartate 87, tyrosine 162, serine 217, and histidine 331; that span reads RQAGR.

This sequence belongs to the uroporphyrinogen decarboxylase family. Homodimer.

The protein resides in the cytoplasm. It catalyses the reaction uroporphyrinogen III + 4 H(+) = coproporphyrinogen III + 4 CO2. It participates in porphyrin-containing compound metabolism; protoporphyrin-IX biosynthesis; coproporphyrinogen-III from 5-aminolevulinate: step 4/4. Its function is as follows. Catalyzes the decarboxylation of four acetate groups of uroporphyrinogen-III to yield coproporphyrinogen-III. This chain is Uroporphyrinogen decarboxylase, found in Streptomyces avermitilis (strain ATCC 31267 / DSM 46492 / JCM 5070 / NBRC 14893 / NCIMB 12804 / NRRL 8165 / MA-4680).